A 596-amino-acid polypeptide reads, in one-letter code: Transcription factor EGL1 (596 aa).

A bHLH domain is found at 401-450 (EETGNHALSEKKRREKLNERFMTLRSIIPSISKIDKVSILDDTIEYLQDL).

Efficient DNA binding requires dimerization with another bHLH protein. Homodimer and heterodimer with GL3. Interacts with CPC, MYB0/GL1, MYB5, MYB23, MYB113, MYB114, MYB75/PAP1, MYB90/PAP2, TT2, TRY, TTG1 and MYB66/WER. As to expression, ubiquitous with higher levels in buds and flowers. Specifically localized in developing root hair cells. Expressed in epidermal root hair cells (trichoblasts) and moves to root hairless cells (atrichoblasts) by a cell-to-cell movement through plasmodesmata (at protein level).

It is found in the nucleus. Its function is as follows. Transcription activator, when associated with MYB75/PAP1, MYB90/PAP2 or TT2. Involved in epidermal cell fate specification. Negatively regulates stomata formation but promotes trichome formation. Together with MYB66/WER, promotes the formation of non-hair cells in root epidermis cells in the N position. Whereas together with CPC, promotes the formation of hair cells in root epidermis cells in the H position by inhibiting non-hair cell formation. Also seems to play a role in the activation of anthocyanin biosynthesis, probably together with MYB75/PAP1. Involved in seed mucilage production. Activates the transcription of GL2. In Arabidopsis thaliana (Mouse-ear cress), this protein is Transcription factor EGL1 (BHLH2).